A 235-amino-acid chain; its full sequence is Probable inactive serine protease 37 (235 aa).

Residues 1–19 form the signal peptide; sequence MKYVFYLGVLAGTFFFADS. Residues 20-233 enclose the Peptidase S1 domain; the sequence is SVQKEDPAPY…YVSWIENTAK (214 aa). 3 disulfide bridges follow: C40/C56, C131/C198, and C163/C177.

The protein belongs to the peptidase S1 family. Testis-specific. Expressed in spermatids (at protein level).

The protein localises to the cytoplasmic vesicle. It localises to the secretory vesicle. It is found in the acrosome. The protein resides in the secreted. Functionally, plays a role in male fertility. May have a role in sperm migration or binding to zona-intact eggs. Involved in the activation of the proacrosin/acrosin system. The protein is Probable inactive serine protease 37 of Homo sapiens (Human).